The chain runs to 605 residues: Dolichyl-diphosphooligosaccharide--protein glycosyltransferase subunit 1 (605 aa).

The signal sequence occupies residues 1 to 22 (MEAPIVLLLLLWLALAPTPGSA). At 23–437 (SSEAPPLVNE…FNKVLMLQEP (415 aa)) the chain is on the lumenal side. Residue K185 is modified to N6-acetyllysine. An N-linked (GlcNAc...) asparagine glycan is attached at N297. The chain crosses the membrane as a helical span at residues 438–455 (LLVVAAFYILFFTVIIYV). Topologically, residues 456 to 605 (RLDFSITKDP…TKIDHILDAL (150 aa)) are cytoplasmic. The residue at position 536 (K536) is an N6-acetyllysine; alternate. A Glycyl lysine isopeptide (Lys-Gly) (interchain with G-Cter in SUMO2); alternate cross-link involves residue K536.

The protein belongs to the OST1 family. In terms of assembly, component of the oligosaccharyltransferase (OST) complex. OST exists in two different complex forms which contain common core subunits RPN1, RPN2, OST48, OST4, DAD1 and TMEM258, either STT3A or STT3B as catalytic subunits, and form-specific accessory subunits. STT3A complex assembly occurs through the formation of 3 subcomplexes. Subcomplex 1 contains RPN1 and TMEM258, subcomplex 2 contains the STT3A-specific subunits STT3A, DC2/OSTC, and KCP2 as well as the core subunit OST4, and subcomplex 3 contains RPN2, DAD1, and OST48. The STT3A complex can form stable complexes with the Sec61 complex or with both the Sec61 and TRAP complexes. Interacts with TMEM35A/NACHO. Ubiquitinated by the ECS(ASB11) complex. Post-translationally, ufmylated by UFL1 in response to endoplasmic reticulum stress, promoting reticulophagy of endoplasmic reticulum sheets. In terms of tissue distribution, expressed in all tissues tested.

The protein localises to the endoplasmic reticulum membrane. The protein operates within protein modification; protein glycosylation. Functionally, subunit of the oligosaccharyl transferase (OST) complex that catalyzes the initial transfer of a defined glycan (Glc(3)Man(9)GlcNAc(2) in eukaryotes) from the lipid carrier dolichol-pyrophosphate to an asparagine residue within an Asn-X-Ser/Thr consensus motif in nascent polypeptide chains, the first step in protein N-glycosylation. N-glycosylation occurs cotranslationally and the complex associates with the Sec61 complex at the channel-forming translocon complex that mediates protein translocation across the endoplasmic reticulum (ER). All subunits are required for a maximal enzyme activity. In Rattus norvegicus (Rat), this protein is Dolichyl-diphosphooligosaccharide--protein glycosyltransferase subunit 1.